Reading from the N-terminus, the 948-residue chain is P cell-type agglutination protein map4 (948 aa).

An N-terminal signal peptide occupies residues 1–23 (MNSYAILLSLFFSFERLLTLANA). Asparagine 31, asparagine 32, and asparagine 57 each carry an N-linked (GlcNAc...) asparagine glycan. 2 disordered regions span residues 136-174 (IPRG…IGTG) and 253-333 (FYET…PTTY). Residues 149-174 (PTYSASDSSATTITSSSPSTSIIGTG) show a composition bias toward low complexity. Residues 253 to 264 (FYETKSSTSSVP) show a composition bias toward polar residues. The segment covering 265-332 (TQTIDSSSFT…PSLSSALPTT (68 aa)) has biased composition (low complexity). N-linked (GlcNAc...) asparagine glycosylation is present at asparagine 383. A disordered region spans residues 408–432 (LTSSTKKIPSTTLPTSSKMITTTTP). 7 N-linked (GlcNAc...) asparagine glycosylation sites follow: asparagine 436, asparagine 469, asparagine 491, asparagine 522, asparagine 553, asparagine 568, and asparagine 598. 5 repeat units span residues 617 to 652 (SYVT…IPTP), 653 to 688 (SWVT…IPTP), 689 to 724 (SWVT…IPTP), 725 to 760 (SWVT…IPTP), and 761 to 796 (SWVT…VPTP). The interval 617–796 (SYVTETTTSG…GTVLIDVPTP (180 aa)) is 5 X 36 AA approximate tandem repeats. One can recognise a DIPSY domain in the interval 796–948 (PTASSSPFPS…ANVVLRALEY (153 aa)). The N-linked (GlcNAc...) asparagine glycan is linked to asparagine 921.

Belongs to the mam3/map4 family.

It localises to the cell surface. In terms of biological role, p cell-type specific protein which involved in agglutination during conjugation. The protein is P cell-type agglutination protein map4 of Schizosaccharomyces pombe (strain 972 / ATCC 24843) (Fission yeast).